Reading from the N-terminus, the 139-residue chain is uncharacterized protein (139 aa).

This is an uncharacterized protein from Caenorhabditis elegans.